The chain runs to 316 residues: Malate dehydrogenase 2 (316 aa).

NAD(+)-binding positions include 10–15 and Asp34; that span reads GGGQIG. 2 residues coordinate substrate: Arg83 and Arg89. Residues Asn96 and 119–121 contribute to the NAD(+) site; that span reads ISN. Residues Asn121 and Arg152 each contribute to the substrate site. The Proton acceptor role is filled by His176.

This sequence belongs to the LDH/MDH superfamily. MDH type 3 family.

The catalysed reaction is (S)-malate + NAD(+) = oxaloacetate + NADH + H(+). Functionally, catalyzes the reversible oxidation of malate to oxaloacetate. This Anaeromyxobacter dehalogenans (strain 2CP-C) protein is Malate dehydrogenase 2.